Reading from the N-terminus, the 244-residue chain is 5-oxoprolinase subunit A (244 aa).

The protein belongs to the LamB/PxpA family. In terms of assembly, forms a complex composed of PxpA, PxpB and PxpC.

The catalysed reaction is 5-oxo-L-proline + ATP + 2 H2O = L-glutamate + ADP + phosphate + H(+). Catalyzes the cleavage of 5-oxoproline to form L-glutamate coupled to the hydrolysis of ATP to ADP and inorganic phosphate. The sequence is that of 5-oxoprolinase subunit A from Shigella flexneri.